Here is a 364-residue protein sequence, read N- to C-terminus: 3-isopropylmalate dehydrogenase (364 aa).

79-90 (GPKWGTGSVRPE) serves as a coordination point for NAD(+). Residues Arg-97, Arg-107, Arg-136, and Asp-225 each contribute to the substrate site. Positions 225, 250, and 254 each coordinate Mg(2+). 289-300 (GSAPDLPKNKVN) serves as a coordination point for NAD(+).

Belongs to the isocitrate and isopropylmalate dehydrogenases family. Homodimer. Requires Mg(2+) as cofactor. The cofactor is Mn(2+).

It localises to the cytoplasm. It carries out the reaction (2R,3S)-3-isopropylmalate + NAD(+) = 4-methyl-2-oxopentanoate + CO2 + NADH. It participates in amino-acid biosynthesis; L-leucine biosynthesis; L-leucine from 3-methyl-2-oxobutanoate: step 3/4. Its function is as follows. Catalyzes the oxidation of 3-carboxy-2-hydroxy-4-methylpentanoate (3-isopropylmalate) to 3-carboxy-4-methyl-2-oxopentanoate. The product decarboxylates to 4-methyl-2 oxopentanoate. The chain is 3-isopropylmalate dehydrogenase (LEU2) from Saccharomyces cerevisiae (strain ATCC 204508 / S288c) (Baker's yeast).